We begin with the raw amino-acid sequence, 359 residues long: Cytohesin-interacting protein (359 aa).

A PDZ domain is found at 77-166 (VVTVEKQDNG…LLTIETLNGT (90 aa)). Positions 165-188 (GTMIHRRAELEAKLQTLKQTLKKK) form a coiled coil. Positions 166–188 (TMIHRRAELEAKLQTLKQTLKKK) are interaction with CYTH1.

Interacts with CYTH1 and SNX27.

Its subcellular location is the cytoplasm. The protein resides in the early endosome. By its binding to cytohesin-1 (CYTH1), it modifies activation of ARFs by CYTH1 and its precise function may be to sequester CYTH1 in the cytoplasm. In Mus musculus (Mouse), this protein is Cytohesin-interacting protein (Cytip).